The chain runs to 160 residues: S-adenosylmethionine decarboxylase proenzyme (160 aa).

The active-site Schiff-base intermediate with substrate; via pyruvic acid is serine 73. Serine 73 is modified (pyruvic acid (Ser); by autocatalysis). The active-site Proton acceptor; for processing activity is histidine 78. The Proton donor; for catalytic activity role is filled by cysteine 93.

This sequence belongs to the prokaryotic AdoMetDC family. Type 1 subfamily. As to quaternary structure, heterotetramer of two alpha and two beta chains arranged as a dimer of alpha/beta heterodimers. Pyruvate is required as a cofactor. Post-translationally, is synthesized initially as an inactive proenzyme. Formation of the active enzyme involves a self-maturation process in which the active site pyruvoyl group is generated from an internal serine residue via an autocatalytic post-translational modification. Two non-identical subunits are generated from the proenzyme in this reaction, and the pyruvate is formed at the N-terminus of the alpha chain, which is derived from the carboxyl end of the proenzyme. The post-translation cleavage follows an unusual pathway, termed non-hydrolytic serinolysis, in which the side chain hydroxyl group of the serine supplies its oxygen atom to form the C-terminus of the beta chain, while the remainder of the serine residue undergoes an oxidative deamination to produce ammonia and the pyruvoyl group blocking the N-terminus of the alpha chain.

It carries out the reaction S-adenosyl-L-methionine + H(+) = S-adenosyl 3-(methylsulfanyl)propylamine + CO2. The protein operates within amine and polyamine biosynthesis; S-adenosylmethioninamine biosynthesis; S-adenosylmethioninamine from S-adenosyl-L-methionine: step 1/1. Catalyzes the decarboxylation of S-adenosylmethionine to S-adenosylmethioninamine (dcAdoMet), the propylamine donor required for the synthesis of the polyamines spermine and spermidine from the diamine putrescine. The polypeptide is S-adenosylmethionine decarboxylase proenzyme (Pseudomonas aeruginosa (strain LESB58)).